The primary structure comprises 263 residues: Metaxin-2 (263 aa).

Position 2 is an N-acetylserine (Ser2).

This sequence belongs to the metaxin family. As to quaternary structure, interacts with MTX1/metaxin-1. Associates with the mitochondrial contact site and cristae organizing system (MICOS) complex, composed of at least MICOS10/MIC10, CHCHD3/MIC19, CHCHD6/MIC25, APOOL/MIC27, IMMT/MIC60, APOO/MIC23/MIC26 and QIL1/MIC13. This complex was also known under the names MINOS or MitOS complex. The MICOS complex associates with mitochondrial outer membrane proteins SAMM50, MTX1 and MTX2 (together described as components of the mitochondrial outer membrane sorting assembly machinery (SAM) complex) and DNAJC11, mitochondrial inner membrane protein TMEM11 and with HSPA9. The MICOS and SAM complexes together with DNAJC11 are part of a large protein complex spanning both membranes termed the mitochondrial intermembrane space bridging (MIB) complex.

Its subcellular location is the mitochondrion outer membrane. The protein localises to the mitochondrion. In terms of biological role, involved in transport of proteins into the mitochondrion. This chain is Metaxin-2 (MTX2), found in Homo sapiens (Human).